The primary structure comprises 333 residues: ADP-L-glycero-D-manno-heptose-6-epimerase (333 aa).

NADP(+)-binding positions include 11 to 12 (FI), 32 to 33 (DN), lysine 39, lysine 54, 76 to 80 (QGACS), and asparagine 93. Tyrosine 140 acts as the Proton acceptor in catalysis. Lysine 144 provides a ligand contact to NADP(+). Asparagine 170 serves as a coordination point for substrate. 2 residues coordinate NADP(+): valine 171 and lysine 179. The active-site Proton acceptor is the lysine 179. Substrate contacts are provided by residues arginine 181, histidine 188, 202 to 205 (FGGW), arginine 215, and tyrosine 294.

It belongs to the NAD(P)-dependent epimerase/dehydratase family. HldD subfamily. Homopentamer. The cofactor is NADP(+).

The catalysed reaction is ADP-D-glycero-beta-D-manno-heptose = ADP-L-glycero-beta-D-manno-heptose. It functions in the pathway nucleotide-sugar biosynthesis; ADP-L-glycero-beta-D-manno-heptose biosynthesis; ADP-L-glycero-beta-D-manno-heptose from D-glycero-beta-D-manno-heptose 7-phosphate: step 4/4. Its pathway is bacterial outer membrane biogenesis; LPS core biosynthesis. Catalyzes the interconversion between ADP-D-glycero-beta-D-manno-heptose and ADP-L-glycero-beta-D-manno-heptose via an epimerization at carbon 6 of the heptose. The chain is ADP-L-glycero-D-manno-heptose-6-epimerase from Chromobacterium violaceum (strain ATCC 12472 / DSM 30191 / JCM 1249 / CCUG 213 / NBRC 12614 / NCIMB 9131 / NCTC 9757 / MK).